The following is a 185-amino-acid chain: Transcription factor FapR (185 aa).

The protein belongs to the FapR family.

Transcriptional factor involved in regulation of membrane lipid biosynthesis by repressing genes involved in fatty acid and phospholipid metabolism. This is Transcription factor FapR from Staphylococcus aureus (strain Mu3 / ATCC 700698).